The chain runs to 270 residues: Type III pantothenate kinase (270 aa).

D6 to V13 provides a ligand contact to ATP. Position 107–110 (G107–R110) interacts with substrate. D109 (proton acceptor) is an active-site residue. Position 129 (D129) interacts with K(+). T132 contacts ATP. T184 contributes to the substrate binding site.

The protein belongs to the type III pantothenate kinase family. In terms of assembly, homodimer. The cofactor is NH4(+). Requires K(+) as cofactor.

The protein resides in the cytoplasm. It catalyses the reaction (R)-pantothenate + ATP = (R)-4'-phosphopantothenate + ADP + H(+). It participates in cofactor biosynthesis; coenzyme A biosynthesis; CoA from (R)-pantothenate: step 1/5. Its function is as follows. Catalyzes the phosphorylation of pantothenate (Pan), the first step in CoA biosynthesis. The protein is Type III pantothenate kinase of Gluconobacter oxydans (strain 621H) (Gluconobacter suboxydans).